The sequence spans 177 residues: Large ribosomal subunit protein uL6 (177 aa).

This sequence belongs to the universal ribosomal protein uL6 family. Part of the 50S ribosomal subunit.

Functionally, this protein binds to the 23S rRNA, and is important in its secondary structure. It is located near the subunit interface in the base of the L7/L12 stalk, and near the tRNA binding site of the peptidyltransferase center. This is Large ribosomal subunit protein uL6 from Pseudomonas putida (strain ATCC 700007 / DSM 6899 / JCM 31910 / BCRC 17059 / LMG 24140 / F1).